Reading from the N-terminus, the 338-residue chain is uncharacterized protein (338 aa).

An N-terminal signal peptide occupies residues 1 to 29; it reads MIKQLYKNITICSLTISTALTVFPATSYA.

It belongs to the aerolysin family.

This is an uncharacterized protein from Staphylococcus aureus (strain bovine RF122 / ET3-1).